The chain runs to 422 residues: Glutamyl-tRNA reductase (422 aa).

Substrate contacts are provided by residues 48 to 51, Ser100, 105 to 107, and Gln111; these read TCNR and EDQ. Cys49 (nucleophile) is an active-site residue. Residue 180–185 coordinates NADP(+); sequence GTGEMG.

It belongs to the glutamyl-tRNA reductase family. Homodimer.

The catalysed reaction is (S)-4-amino-5-oxopentanoate + tRNA(Glu) + NADP(+) = L-glutamyl-tRNA(Glu) + NADPH + H(+). Its pathway is porphyrin-containing compound metabolism; protoporphyrin-IX biosynthesis; 5-aminolevulinate from L-glutamyl-tRNA(Glu): step 1/2. In terms of biological role, catalyzes the NADPH-dependent reduction of glutamyl-tRNA(Glu) to glutamate 1-semialdehyde (GSA). This is Glutamyl-tRNA reductase from Methanococcoides burtonii (strain DSM 6242 / NBRC 107633 / OCM 468 / ACE-M).